The chain runs to 253 residues: 3-deoxy-manno-octulosonate cytidylyltransferase (253 aa).

Belongs to the KdsB family.

The protein resides in the cytoplasm. It carries out the reaction 3-deoxy-alpha-D-manno-oct-2-ulosonate + CTP = CMP-3-deoxy-beta-D-manno-octulosonate + diphosphate. Its pathway is nucleotide-sugar biosynthesis; CMP-3-deoxy-D-manno-octulosonate biosynthesis; CMP-3-deoxy-D-manno-octulosonate from 3-deoxy-D-manno-octulosonate and CTP: step 1/1. The protein operates within bacterial outer membrane biogenesis; lipopolysaccharide biosynthesis. Its function is as follows. Activates KDO (a required 8-carbon sugar) for incorporation into bacterial lipopolysaccharide in Gram-negative bacteria. This is 3-deoxy-manno-octulosonate cytidylyltransferase from Edwardsiella ictaluri (strain 93-146).